The sequence spans 1059 residues: MKFLLLSALLFLHSSLAWTREKHYYIGITEAVWDYASGSEEKELISVDTEQSNFYLRNGPDRIGRKYKKALYSEYTDGTFTKTIDKPAWLGFLGPVIKAEVGDKVSVHVKNFASRPYTFHAHGVTYTKANEGAIYPDNTTDFQRADDKLFPGQQYLYVLRANEPSPGEGDSNCVTRIYHSHVDAPKDIASGLIGPLILCKKGSLHKEKEENIDQEFVLMFSVVDENLSWYLEDNIKTFCSEPEKVDKDNEDFQESNRMYSINGYTFGSLPGLSMCAEDRVKWYLFGMGNEVDVHSELFHGQALTSKNYHTDIINLFPATLIDVSMVAQNPGVWMLSCQNLNHLKAGLQAFFQVRDCNKPSPDDDIQDRHVRHYYIAAEETIWDYAPSGTDTFTGENFTSLGSDSRVFFEQGATRIGGSYKKLVYREYTDDSFTNRKERGPDEEHLGILGPVIWAEVGDIIRVTFHNKGQFPLSIQPMGVRFTKENEGTYYGPDGRSSKQASHVAPKETFTYEWTVPKEMGPTYADPVCLSKMYYSGVDLTKDIFTGLIGPMKICKKGSLLADGRQKDVDKEFYLFATVFDENESLLLDDNIRMFTTAPENVDKEDEDFQESNKMHSMNGFMYGNLPGLNMCLGESIVWYLFSAGNEADVHGIYFSGNTYLSKGERRDTANLFPHKSLTLLMTPDTEGSFDVECLTTDHYTGGMKQKYTVNQCKGQFEDVTLYQGERTYYIAAVEVEWDYSPSRDWEMELHHLQEQNVSNAFLDKEEFFIGSKYKKVVYREFTDSTFREQVKRRAEEEHLGMLGPLIHADVGAKVKVVFKNMATRPYSIHAHGVKTKSSTVAPTLPGEVRTYIWQIPERSGAGTEDSPCIPWAYYSTVDRVKDLYSGLIGPLIVCRKSYVKVFNPKKKMEFSLLFLVFDENESWYLDDNINTYPDHPEKDNKDNEEFIESNKMHAINGKMFGNLQGLTMHVGDEVNWYVMAMGNEIDLHTVHFHGHSFQYKHRGIHSSDVFDFFPGTYQTLEMFPQTPGTWLLHCHVTDHIHAGMVTTYTVLPNQETKSG.

Positions 1-19 (MKFLLLSALLFLHSSLAWT) are cleaved as a signal peptide. Plastocyanin-like domains lie at 20–199 (REKH…LILC), 208–356 (KEEN…VRDC), 369–554 (HVRH…MKIC), 564–712 (RQKD…VNQC), 724–894 (GERT…LIVC), and 902–1055 (FNPK…PNQE). Residues Y55, G64, and Y67 each coordinate Na(+). Cu(2+)-binding residues include H120 and H122. Residue H120 coordinates O2. Residue K128 coordinates Ca(2+). An N-linked (GlcNAc...) asparagine glycan is attached at N138. Q143, D146, and D147 together coordinate Ca(2+). C173 and C199 form a disulfide bridge. Cu(2+) contacts are provided by H179 and H181. Residue H179 coordinates O2. A glycan (N-linked (GlcNAc...) asparagine) is linked at N226. S255 lines the Na(+) pocket. A disulfide bridge links C275 with C356. Cu(2+) contacts are provided by H294, C337, and H342. N-linked (GlcNAc...) asparagine glycosylation is present at N396. 3 residues coordinate Na(+): F407, G416, and Y419. C528 and C554 are disulfide-bonded. N582 carries an N-linked (GlcNAc...) asparagine glycan. A Na(+)-binding site is contributed by S611. Residues C631 and C712 are joined by a disulfide bond. Positions 650, 693, 698, and 703 each coordinate Cu(2+). The active-site Nucleophile; for glutathione peroxidase activity is C693. N756 carries an N-linked (GlcNAc...) asparagine glycan. Residues F761, G770, and Y773 each coordinate Na(+). A disulfide bridge links C868 with C894. Residue N920 is glycosylated (N-linked (GlcNAc...) asparagine). Position 949 (S949) interacts with Na(+). Cu(2+)-binding residues include H988, H991, H993, H1033, C1034, H1035, H1039, and M1044. The O2 site is built by H991 and H993. H1035 is an O2 binding site.

The protein belongs to the multicopper oxidase family. Found in a complex with MPO and LTF; interacts directly with MPO and LTF, which allows Fe(3+) incorporation into LTF, activation of CP ferroxidase activity and protection of CP antioxidant properties by MPO. Cu(2+) serves as cofactor. Synthesized in liver and secreted into the plasma. Also choroid plexus, yolk sac, placenta, and testis; not in stomach and small intestine. Fetal lung and liver.

The protein resides in the secreted. It catalyses the reaction 4 Fe(2+) + O2 + 4 H(+) = 4 Fe(3+) + 2 H2O. It carries out the reaction 4 Cu(+) + O2 + 4 H(+) = 4 Cu(2+) + 2 H2O. The enzyme catalyses a hydroperoxide + 2 glutathione = an alcohol + glutathione disulfide + H2O. The catalysed reaction is 4 nitric oxide + O2 + 2 H2O = 4 nitrite + 4 H(+). It catalyses the reaction 2 glutathione + H2O2 = glutathione disulfide + 2 H2O. Multifunctional blue, copper-binding (6-7 atoms per molecule) glycoprotein. It has ferroxidase activity oxidizing Fe(2+) to Fe(3+) without releasing radical oxygen species. It is involved in iron transport across the cell membrane. Copper ions provide a large number of enzymatic activites. Oxidizes highly toxic ferrous ions to the ferric state for further incorporation onto apo-transferrins, catalyzes Cu(+) oxidation and promotes the oxidation of biogenic amines such as norepinephrin and serotonin. Provides Cu(2+) ions for the ascorbate-mediated deaminase degradation of the heparan sulfate chains of GPC1. Has glutathione peroxidase-like activity, can remove both hydrogen peroxide and lipid hydroperoxide in the presence of thiols. Also shows NO-oxidase and NO2 synthase activities that determine endocrine NO homeostasis. This chain is Ceruloplasmin (Cp), found in Rattus norvegicus (Rat).